A 306-amino-acid polypeptide reads, in one-letter code: Tryptophan 2,3-dioxygenase (306 aa).

Residues methionine 1–alanine 33 are disordered. Substrate-binding positions include phenylalanine 75–histidine 79, tyrosine 137, and arginine 141. Position 264 (histidine 264) interacts with heme. Position 278 (threonine 278) interacts with substrate.

This sequence belongs to the tryptophan 2,3-dioxygenase family. In terms of assembly, homotetramer. Heme is required as a cofactor.

The catalysed reaction is L-tryptophan + O2 = N-formyl-L-kynurenine. The protein operates within amino-acid degradation; L-tryptophan degradation via kynurenine pathway; L-kynurenine from L-tryptophan: step 1/2. Heme-dependent dioxygenase that catalyzes the oxidative cleavage of the L-tryptophan (L-Trp) pyrrole ring and converts L-tryptophan to N-formyl-L-kynurenine. Catalyzes the oxidative cleavage of the indole moiety. The chain is Tryptophan 2,3-dioxygenase from Burkholderia pseudomallei (strain 668).